The chain runs to 424 residues: Protein-glutamate methylesterase/protein-glutamine glutaminase (424 aa).

Residues 6-123 form the Response regulatory domain; it reads RVLVVDDSAF…SLDDFTRQLT (118 aa). A 4-aspartylphosphate modification is found at aspartate 57. The disordered stretch occupies residues 177-210; it reads SRLSPGRSPGGKEGVAGAVSAGSTRGEAIRPGKG. The CheB-type methylesterase domain maps to 229–423; that stretch reads RRPGIEVVAI…PAIVALVTGA (195 aa). Catalysis depends on residues serine 241, histidine 268, and aspartate 365.

It belongs to the CheB family. Post-translationally, phosphorylated by CheA. Phosphorylation of the N-terminal regulatory domain activates the methylesterase activity.

Its subcellular location is the cytoplasm. It catalyses the reaction [protein]-L-glutamate 5-O-methyl ester + H2O = L-glutamyl-[protein] + methanol + H(+). The catalysed reaction is L-glutaminyl-[protein] + H2O = L-glutamyl-[protein] + NH4(+). Functionally, involved in chemotaxis. Part of a chemotaxis signal transduction system that modulates chemotaxis in response to various stimuli. Catalyzes the demethylation of specific methylglutamate residues introduced into the chemoreceptors (methyl-accepting chemotaxis proteins or MCP) by CheR. Also mediates the irreversible deamidation of specific glutamine residues to glutamic acid. In Moorella thermoacetica (strain ATCC 39073 / JCM 9320), this protein is Protein-glutamate methylesterase/protein-glutamine glutaminase.